We begin with the raw amino-acid sequence, 318 residues long: 4-hydroxy-3-methylbut-2-enyl diphosphate reductase (318 aa).

Position 12 (Cys-12) interacts with [4Fe-4S] cluster. The (2E)-4-hydroxy-3-methylbut-2-enyl diphosphate site is built by His-41 and His-74. His-41 and His-74 together coordinate dimethylallyl diphosphate. The isopentenyl diphosphate site is built by His-41 and His-74. Cys-96 contacts [4Fe-4S] cluster. His-124 contributes to the (2E)-4-hydroxy-3-methylbut-2-enyl diphosphate binding site. His-124 contributes to the dimethylallyl diphosphate binding site. Residue His-124 coordinates isopentenyl diphosphate. Glu-126 (proton donor) is an active-site residue. Thr-167 is a (2E)-4-hydroxy-3-methylbut-2-enyl diphosphate binding site. Cys-197 contributes to the [4Fe-4S] cluster binding site. 4 residues coordinate (2E)-4-hydroxy-3-methylbut-2-enyl diphosphate: Ser-225, Ser-226, Asn-227, and Ser-269. Dimethylallyl diphosphate contacts are provided by Ser-225, Ser-226, Asn-227, and Ser-269. Residues Ser-225, Ser-226, Asn-227, and Ser-269 each coordinate isopentenyl diphosphate.

The protein belongs to the IspH family. The cofactor is [4Fe-4S] cluster.

It catalyses the reaction isopentenyl diphosphate + 2 oxidized [2Fe-2S]-[ferredoxin] + H2O = (2E)-4-hydroxy-3-methylbut-2-enyl diphosphate + 2 reduced [2Fe-2S]-[ferredoxin] + 2 H(+). It carries out the reaction dimethylallyl diphosphate + 2 oxidized [2Fe-2S]-[ferredoxin] + H2O = (2E)-4-hydroxy-3-methylbut-2-enyl diphosphate + 2 reduced [2Fe-2S]-[ferredoxin] + 2 H(+). Its pathway is isoprenoid biosynthesis; dimethylallyl diphosphate biosynthesis; dimethylallyl diphosphate from (2E)-4-hydroxy-3-methylbutenyl diphosphate: step 1/1. It functions in the pathway isoprenoid biosynthesis; isopentenyl diphosphate biosynthesis via DXP pathway; isopentenyl diphosphate from 1-deoxy-D-xylulose 5-phosphate: step 6/6. Its function is as follows. Catalyzes the conversion of 1-hydroxy-2-methyl-2-(E)-butenyl 4-diphosphate (HMBPP) into a mixture of isopentenyl diphosphate (IPP) and dimethylallyl diphosphate (DMAPP). Acts in the terminal step of the DOXP/MEP pathway for isoprenoid precursor biosynthesis. The chain is 4-hydroxy-3-methylbut-2-enyl diphosphate reductase from Francisella tularensis subsp. mediasiatica (strain FSC147).